A 96-amino-acid chain; its full sequence is UPF0184 protein CG14818 (96 aa).

2 disordered regions span residues 1-28 and 70-96; these read MSPK…LQEM and IAEE…AAPK. Over residues 8-21 the composition is skewed to polar residues; the sequence is DPSSSGDSGNTNVQ. Residues 21–77 are a coiled coil; sequence QEADLQEMEDVNNSLDALSCALDAVEQRTDDIMSQLRELLNSNREIRRLIAEENDNA. Positions 72-85 are enriched in acidic residues; it reads EENDNAPESGDDNM.

This sequence belongs to the UPF0184 (EST00098) family.

This is UPF0184 protein CG14818 from Drosophila melanogaster (Fruit fly).